Consider the following 273-residue polypeptide: Urease accessory protein UreD (273 aa).

This sequence belongs to the UreD family. In terms of assembly, ureD, UreF and UreG form a complex that acts as a GTP-hydrolysis-dependent molecular chaperone, activating the urease apoprotein by helping to assemble the nickel containing metallocenter of UreC. The UreE protein probably delivers the nickel.

Its subcellular location is the cytoplasm. Its function is as follows. Required for maturation of urease via the functional incorporation of the urease nickel metallocenter. The chain is Urease accessory protein UreD from Mycolicibacterium gilvum (strain PYR-GCK) (Mycobacterium gilvum (strain PYR-GCK)).